The following is a 586-amino-acid chain: Isocitrate dehydrogenase kinase/phosphatase (586 aa).

ATP contacts are provided by residues 316-322 (ARGDRGL) and Lys-337. Asp-372 is a catalytic residue.

The protein belongs to the AceK family.

Its subcellular location is the cytoplasm. It catalyses the reaction L-seryl-[isocitrate dehydrogenase] + ATP = O-phospho-L-seryl-[isocitrate dehydrogenase] + ADP + H(+). Functionally, bifunctional enzyme which can phosphorylate or dephosphorylate isocitrate dehydrogenase (IDH) on a specific serine residue. This is a regulatory mechanism which enables bacteria to bypass the Krebs cycle via the glyoxylate shunt in response to the source of carbon. When bacteria are grown on glucose, IDH is fully active and unphosphorylated, but when grown on acetate or ethanol, the activity of IDH declines drastically concomitant with its phosphorylation. The polypeptide is Isocitrate dehydrogenase kinase/phosphatase (Anaeromyxobacter dehalogenans (strain 2CP-C)).